The sequence spans 879 residues: Alanine--tRNA ligase (879 aa).

The Zn(2+) site is built by H566, H570, C668, and H672.

Belongs to the class-II aminoacyl-tRNA synthetase family. Requires Zn(2+) as cofactor.

The protein localises to the cytoplasm. It carries out the reaction tRNA(Ala) + L-alanine + ATP = L-alanyl-tRNA(Ala) + AMP + diphosphate. In terms of biological role, catalyzes the attachment of alanine to tRNA(Ala) in a two-step reaction: alanine is first activated by ATP to form Ala-AMP and then transferred to the acceptor end of tRNA(Ala). Also edits incorrectly charged Ser-tRNA(Ala) and Gly-tRNA(Ala) via its editing domain. The chain is Alanine--tRNA ligase from Clostridium tetani (strain Massachusetts / E88).